We begin with the raw amino-acid sequence, 121 residues long: Putative inactive aspartokinase 3 HI_1632 (121 aa).

It belongs to the aspartokinase family.

The sequence is that of Putative inactive aspartokinase 3 HI_1632 from Haemophilus influenzae (strain ATCC 51907 / DSM 11121 / KW20 / Rd).